We begin with the raw amino-acid sequence, 58 residues long: UPF0391 membrane protein ABO_0024 (58 aa).

2 helical membrane passes run 4–24 and 28–48; these read WALT…GGIA and ASIA…SLVV.

The protein belongs to the UPF0391 family.

It localises to the cell membrane. In Alcanivorax borkumensis (strain ATCC 700651 / DSM 11573 / NCIMB 13689 / SK2), this protein is UPF0391 membrane protein ABO_0024.